A 130-amino-acid chain; its full sequence is Large-conductance mechanosensitive channel (130 aa).

2 helical membrane passes run 14–34 (IIDLAVAVVIGGAFGAIVTSF) and 73–93 (FVDFIIIAFSIFLAIKFLVKF).

This sequence belongs to the MscL family. Homopentamer.

The protein localises to the cell membrane. Functionally, channel that opens in response to stretch forces in the membrane lipid bilayer. May participate in the regulation of osmotic pressure changes within the cell. This is Large-conductance mechanosensitive channel from Oceanobacillus iheyensis (strain DSM 14371 / CIP 107618 / JCM 11309 / KCTC 3954 / HTE831).